The primary structure comprises 229 residues: CMRF35-like molecule 6 (229 aa).

Positions Met-1–Gly-21 are cleaved as a signal peptide. The region spanning His-22 to Lys-126 is the Ig-like V-type domain. Topologically, residues His-22–His-188 are extracellular. A disulfide bridge connects residues Cys-43 and Cys-110. 2 N-linked (GlcNAc...) asparagine glycosylation sites follow: Asn-90 and Asn-99. The helical transmembrane segment at Phe-189–Trp-209 threads the bilayer. Topologically, residues Val-210–Gln-229 are cytoplasmic.

This sequence belongs to the CD300 family.

Its subcellular location is the cell membrane. The protein is CMRF35-like molecule 6 (Cd300c) of Mus musculus (Mouse).